The following is a 287-amino-acid chain: rRNA adenine N-6-methyltransferase (287 aa).

Basic residues predominate over residues methionine 1–leucine 13. The interval methionine 1–phenylalanine 21 is disordered. Positions 25, 27, 52, 73, 98, and 114 each coordinate S-adenosyl-L-methionine.

This sequence belongs to the class I-like SAM-binding methyltransferase superfamily. rRNA adenine N(6)-methyltransferase family. Homodimer.

Functionally, involved in erythromycin resistance. This chain is rRNA adenine N-6-methyltransferase (ermJ), found in Bacillus anthracis.